A 388-amino-acid chain; its full sequence is tRNA(Ile)-lysidine synthase (388 aa).

51 to 56 lines the ATP pocket; the sequence is SGGRDS.

It belongs to the tRNA(Ile)-lysidine synthase family.

It is found in the cytoplasm. The catalysed reaction is cytidine(34) in tRNA(Ile2) + L-lysine + ATP = lysidine(34) in tRNA(Ile2) + AMP + diphosphate + H(+). Ligates lysine onto the cytidine present at position 34 of the AUA codon-specific tRNA(Ile) that contains the anticodon CAU, in an ATP-dependent manner. Cytidine is converted to lysidine, thus changing the amino acid specificity of the tRNA from methionine to isoleucine. The polypeptide is tRNA(Ile)-lysidine synthase (Bifidobacterium longum subsp. infantis (strain ATCC 15697 / DSM 20088 / JCM 1222 / NCTC 11817 / S12)).